The sequence spans 215 residues: 3-demethoxyubiquinol 3-hydroxylase (215 aa).

Residues Glu-64, Glu-94, His-97, Glu-146, Glu-178, and His-181 each coordinate Fe cation.

This sequence belongs to the COQ7 family. The cofactor is Fe cation.

It localises to the cell membrane. The enzyme catalyses a 5-methoxy-2-methyl-3-(all-trans-polyprenyl)benzene-1,4-diol + AH2 + O2 = a 3-demethylubiquinol + A + H2O. The protein operates within cofactor biosynthesis; ubiquinone biosynthesis. In terms of biological role, catalyzes the hydroxylation of 2-nonaprenyl-3-methyl-6-methoxy-1,4-benzoquinol during ubiquinone biosynthesis. This is 3-demethoxyubiquinol 3-hydroxylase from Azotobacter vinelandii (strain DJ / ATCC BAA-1303).